The primary structure comprises 158 residues: S-ribosylhomocysteine lyase (158 aa).

Fe cation is bound by residues His57, His61, and Cys125.

This sequence belongs to the LuxS family. As to quaternary structure, homodimer. It depends on Fe cation as a cofactor.

The enzyme catalyses S-(5-deoxy-D-ribos-5-yl)-L-homocysteine = (S)-4,5-dihydroxypentane-2,3-dione + L-homocysteine. In terms of biological role, involved in the synthesis of autoinducer 2 (AI-2) which is secreted by bacteria and is used to communicate both the cell density and the metabolic potential of the environment. The regulation of gene expression in response to changes in cell density is called quorum sensing. Catalyzes the transformation of S-ribosylhomocysteine (RHC) to homocysteine (HC) and 4,5-dihydroxy-2,3-pentadione (DPD). In Deinococcus radiodurans (strain ATCC 13939 / DSM 20539 / JCM 16871 / CCUG 27074 / LMG 4051 / NBRC 15346 / NCIMB 9279 / VKM B-1422 / R1), this protein is S-ribosylhomocysteine lyase.